The following is a 375-amino-acid chain: Putative F-box only protein 11 (375 aa).

One can recognise an F-box domain in the interval 1–46 (MVSVNLPWELVEEILCRVPPQSLVKFRTVCKQWNSLFDDNKFVNDH).

This chain is Putative F-box only protein 11 (FBX11), found in Arabidopsis thaliana (Mouse-ear cress).